Reading from the N-terminus, the 380-residue chain is NF-kappa-B inhibitor-like protein 1 (380 aa).

Residues 1–34 (MSNPSPQVPEEEASTSVCRPKSSMASTSRRQRRE) are disordered. ANK repeat units lie at residues 64–93 (GQPP…DPAH) and 97–133 (HGDT…IKNK). 2 disordered regions span residues 131–166 (KNKD…EWRQ) and 185–293 (GDAS…RGSL). Position 150 is a phosphoserine (Ser-150). Positions 237 to 286 (QQEEEQRLFRERARAKEEELRESRARRAQEALGDREPKPTRAGPREEHPR) are enriched in basic and acidic residues.

In terms of assembly, interacts with CACTIN (via N-terminal domain); the interaction occurs in a pro-inflammatory-independent manner.

The protein localises to the nucleus. Functionally, involved in the regulation of innate immune response. Acts as negative regulator of Toll-like receptor and interferon-regulatory factor (IRF) signaling pathways. Contributes to the negative regulation of transcriptional activation of NF-kappa-B target genes in response to endogenous pro-inflammatory stimuli. In Pan troglodytes (Chimpanzee), this protein is NF-kappa-B inhibitor-like protein 1 (NFKBIL1).